Consider the following 311-residue polypeptide: Protease HtpX homolog 1 (311 aa).

Helical transmembrane passes span valine 12–leucine 32 and isoleucine 35–serine 55. Zn(2+) is bound at residue histidine 137. Glutamate 138 is a catalytic residue. Zn(2+) is bound at residue histidine 141. The next 2 helical transmembrane spans lie at valine 159–alanine 179 and leucine 184–leucine 204. Zn(2+) is bound at residue glutamate 216.

Belongs to the peptidase M48B family. It depends on Zn(2+) as a cofactor.

It is found in the cell membrane. In Saccharolobus solfataricus (strain ATCC 35092 / DSM 1617 / JCM 11322 / P2) (Sulfolobus solfataricus), this protein is Protease HtpX homolog 1.